The chain runs to 1408 residues: Protein patched homolog 1 (1408 aa).

The segment at 1–20 (MLTLLEPPGAKRSPTVGNYN) is disordered. The Cytoplasmic segment spans residues 1–136 (MLTLLEPPGA…GNTVHRNAWS (136 aa)). The helical transmembrane segment at 137 to 157 (IILAVSMIFAVCCYGLQYVHI) threads the bilayer. Residues 158–649 (ETDIVKLWVA…STSIADMLEE (492 aa)) lie on the Extracellular side of the membrane. A disordered region spans residues 455 to 479 (STAPIPTTTTLSPEEARAAEEKEKK). Positions 468-479 (EEARAAEEKEKK) are enriched in basic and acidic residues. Asn-599 is a glycosylation site (N-linked (GlcNAc...) asparagine). Residues 650–670 (FCQFNYTIILAGYALMLAYAI) form a helical membrane-spanning segment. The SSD domain maps to 654–816 (NYTIILAGYA…LTIYPAIISI (163 aa)). At 671-686 (VTQARFDNCLPATESS) the chain is on the cytoplasmic side. The helical transmembrane segment at 687 to 707 (MGLALAGVLVVTFASVAGLGL) threads the bilayer. Residues 708 to 709 (AT) lie on the Extracellular side of the membrane. Residues 710 to 730 (WFGIEFNAATTQIVPFLTLGI) traverse the membrane as a helical segment. The Cytoplasmic segment spans residues 731 to 765 (GVDNMFMLLHNYRDVVKLAGGHAEMAILMRETGMS). Residues 766–786 (ILCTSINNILSFLTGTLLPIP) form a helical membrane-spanning segment. Residues 787-795 (ALRSFCAQS) lie on the Extracellular side of the membrane. A helical membrane pass occupies residues 796-816 (SILLTFNFIAILTIYPAIISI). The Cytoplasmic segment spans residues 817-901 (DLRRKKAQRR…YYYIPFISKP (85 aa)). The chain crosses the membrane as a helical span at residues 902-922 (ASKVAIIVGCCALLGASFIGM). Residues 923 to 1175 (RQSTLGLELG…QGIAFTFWEQ (253 aa)) are Extracellular-facing. Asn-1026 and Asn-1036 each carry an N-linked (GlcNAc...) asparagine glycan. The helical transmembrane segment at 1176–1196 (YLFLTGNLMQAISIITISVFC) threads the bilayer. Topologically, residues 1197 to 1217 (VISVLLFNPWAALMVVCILGI) are cytoplasmic. Transmembrane regions (helical) follow at residues 1218-1238 (MTCELAGFMGLVGIKLNPVSA) and 1239-1259 (VTLITAVGIGVEFTVHVVVSF). Residues 1260 to 1276 (LTALGTRSQRTSSAVDR) are Extracellular-facing. The chain crosses the membrane as a helical span at residues 1277–1297 (VFVPVIHGSFSTLLGILMLGF). The Cytoplasmic segment spans residues 1298–1305 (SEFEFVVK). Residues 1306–1326 (YFFIVMTALICIGIINGLILL) form a helical membrane-spanning segment. The Extracellular segment spans residues 1327–1408 (PVLLSWFGPR…GNNTRRLPAV (82 aa)). Residues 1342–1408 (TGGKTTLTLP…GNNTRRLPAV (67 aa)) are disordered. Low complexity predominate over residues 1387-1408 (TTRTSGGNRGTVGNNTRRLPAV).

Belongs to the patched family. As to expression, germ line and its progenitors.

It localises to the membrane. Functionally, required but not essential for cytokinesis of mitotically proliferating germ cells. In Caenorhabditis elegans, this protein is Protein patched homolog 1 (ptc-1).